A 263-amino-acid chain; its full sequence is Endonuclease 8 (263 aa).

P2 serves as the catalytic Schiff-base intermediate with DNA. E3 serves as the catalytic Proton donor. The active-site Proton donor; for beta-elimination activity is K53. DNA is bound by residues Q70, R125, and N169. Residues 229–263 (KVFHRDGEPCERCGSIIEKTTLSSRPFYWCPGCQH) form an FPG-type zinc finger. R253 (proton donor; for delta-elimination activity) is an active-site residue.

This sequence belongs to the FPG family. Requires Zn(2+) as cofactor.

The catalysed reaction is 2'-deoxyribonucleotide-(2'-deoxyribose 5'-phosphate)-2'-deoxyribonucleotide-DNA = a 3'-end 2'-deoxyribonucleotide-(2,3-dehydro-2,3-deoxyribose 5'-phosphate)-DNA + a 5'-end 5'-phospho-2'-deoxyribonucleoside-DNA + H(+). Functionally, involved in base excision repair of DNA damaged by oxidation or by mutagenic agents. Acts as a DNA glycosylase that recognizes and removes damaged bases. Has a preference for oxidized pyrimidines, such as thymine glycol, 5,6-dihydrouracil and 5,6-dihydrothymine. Has AP (apurinic/apyrimidinic) lyase activity and introduces nicks in the DNA strand. Cleaves the DNA backbone by beta-delta elimination to generate a single-strand break at the site of the removed base with both 3'- and 5'-phosphates. This is Endonuclease 8 from Escherichia coli O17:K52:H18 (strain UMN026 / ExPEC).